A 359-amino-acid chain; its full sequence is UDP-3-O-acylglucosamine N-acyltransferase (359 aa).

Histidine 253 acts as the Proton acceptor in catalysis.

This sequence belongs to the transferase hexapeptide repeat family. LpxD subfamily. As to quaternary structure, homotrimer.

It carries out the reaction a UDP-3-O-[(3R)-3-hydroxyacyl]-alpha-D-glucosamine + a (3R)-hydroxyacyl-[ACP] = a UDP-2-N,3-O-bis[(3R)-3-hydroxyacyl]-alpha-D-glucosamine + holo-[ACP] + H(+). Its pathway is bacterial outer membrane biogenesis; LPS lipid A biosynthesis. Catalyzes the N-acylation of UDP-3-O-acylglucosamine using 3-hydroxyacyl-ACP as the acyl donor. Is involved in the biosynthesis of lipid A, a phosphorylated glycolipid that anchors the lipopolysaccharide to the outer membrane of the cell. This is UDP-3-O-acylglucosamine N-acyltransferase from Burkholderia cenocepacia (strain ATCC BAA-245 / DSM 16553 / LMG 16656 / NCTC 13227 / J2315 / CF5610) (Burkholderia cepacia (strain J2315)).